The chain runs to 96 residues: Cysteine protease immunity 1 (96 aa).

This Escherichia coli O1:K1:H7 (strain ATCC 11775 / DSM 30083 / JCM 1649 / NBRC 102203 / NCTC 9001 / U5/41) protein is Cysteine protease immunity 1.